A 411-amino-acid polypeptide reads, in one-letter code: Lissencephaly-1 homolog (411 aa).

The region spanning 9–41 (QREELNQAIADYLGSNGYADSLETFRKEADLST) is the LisH domain. Positions 56–83 (TSVIRLQKKVMELEAKLTEAEKEVIEGA) form a coiled coil. WD repeat units lie at residues 106–147 (GHRA…RSLK), 148–187 (GHTD…ECIK), 191–230 (GHDH…CVKT), 233–272 (GHRE…CKVE), 275–334 (DHEH…CLLT), 337–376 (GHDN…CMKT), and 379–411 (AHQH…WECR).

Belongs to the WD repeat LIS1/nudF family.

It localises to the cytoplasm. Its subcellular location is the cytoskeleton. The protein localises to the microtubule organizing center. It is found in the centrosome. Its function is as follows. Positively regulates the activity of the minus-end directed microtubule motor protein dynein. May enhance dynein-mediated microtubule sliding by targeting dynein to the microtubule plus end. Required for several dynein- and microtubule-dependent processes. The polypeptide is Lissencephaly-1 homolog (Drosophila yakuba (Fruit fly)).